The sequence spans 150 residues: D-aminoacyl-tRNA deacylase (150 aa).

Residues Gly136–Pro137 carry the Gly-cisPro motif, important for rejection of L-amino acids motif.

The protein belongs to the DTD family. As to quaternary structure, homodimer.

It localises to the cytoplasm. It catalyses the reaction glycyl-tRNA(Ala) + H2O = tRNA(Ala) + glycine + H(+). The catalysed reaction is a D-aminoacyl-tRNA + H2O = a tRNA + a D-alpha-amino acid + H(+). Its function is as follows. An aminoacyl-tRNA editing enzyme that deacylates mischarged D-aminoacyl-tRNAs. Also deacylates mischarged glycyl-tRNA(Ala), protecting cells against glycine mischarging by AlaRS. Acts via tRNA-based rather than protein-based catalysis; rejects L-amino acids rather than detecting D-amino acids in the active site. By recycling D-aminoacyl-tRNA to D-amino acids and free tRNA molecules, this enzyme counteracts the toxicity associated with the formation of D-aminoacyl-tRNA entities in vivo and helps enforce protein L-homochirality. In Staphylococcus aureus (strain bovine RF122 / ET3-1), this protein is D-aminoacyl-tRNA deacylase.